The chain runs to 524 residues: Peptide chain release factor 3 (524 aa).

The region spanning 8 to 276 (NKRRTFAIIS…GFAKYAPAPE (269 aa)) is the tr-type G domain. Residues 17–24 (SHPDAGKT), 85–89 (DTPGH), and 139–142 (NKLD) each bind GTP.

Belongs to the TRAFAC class translation factor GTPase superfamily. Classic translation factor GTPase family. PrfC subfamily.

It is found in the cytoplasm. Increases the formation of ribosomal termination complexes and stimulates activities of RF-1 and RF-2. It binds guanine nucleotides and has strong preference for UGA stop codons. It may interact directly with the ribosome. The stimulation of RF-1 and RF-2 is significantly reduced by GTP and GDP, but not by GMP. This is Peptide chain release factor 3 from Hydrogenovibrio crunogenus (strain DSM 25203 / XCL-2) (Thiomicrospira crunogena).